The following is a 957-amino-acid chain: Iron-responsive element-binding protein 2 (957 aa).

[4Fe-4S] cluster-binding residues include cysteine 506, cysteine 572, and cysteine 575.

The protein belongs to the aconitase/IPM isomerase family. Requires [4Fe-4S] cluster as cofactor. Post-translationally, ubiquitinated and degraded by the proteasome in presence of high level of iron and oxygen.

It localises to the cytoplasm. In terms of biological role, RNA-binding protein that binds to iron-responsive elements (IRES), which are stem-loop structures found in the 5'-UTR of ferritin, and delta aminolevulinic acid synthase mRNAs, and in the 3'-UTR of transferrin receptor mRNA. Binding to the IRE element in ferritin results in the repression of its mRNA translation. Binding of the protein to the transferrin receptor mRNA inhibits the degradation of this otherwise rapidly degraded mRNA. This is Iron-responsive element-binding protein 2 (ireb2) from Xenopus tropicalis (Western clawed frog).